Here is a 431-residue protein sequence, read N- to C-terminus: uncharacterized protein (431 aa).

This is an uncharacterized protein from Caenorhabditis elegans.